A 389-amino-acid chain; its full sequence is ATP phosphoribosyltransferase regulatory subunit (389 aa).

This sequence belongs to the class-II aminoacyl-tRNA synthetase family. HisZ subfamily. Heteromultimer composed of HisG and HisZ subunits.

It localises to the cytoplasm. It participates in amino-acid biosynthesis; L-histidine biosynthesis; L-histidine from 5-phospho-alpha-D-ribose 1-diphosphate: step 1/9. In terms of biological role, required for the first step of histidine biosynthesis. May allow the feedback regulation of ATP phosphoribosyltransferase activity by histidine. In Moorella thermoacetica (strain ATCC 39073 / JCM 9320), this protein is ATP phosphoribosyltransferase regulatory subunit.